Reading from the N-terminus, the 139-residue chain is Fluoroacetyl-CoA thioesterase (139 aa).

Substrate contacts are provided by residues 40 to 50 (FATGFMVGLME) and Gly-69. Catalysis depends on residues Thr-42 and Glu-50. CoA contacts are provided by residues Gly-69 and 76–77 (HT). His-76 is a catalytic residue. Position 120 (Arg-120) interacts with substrate.

Homodimer.

The catalysed reaction is fluoroacetyl-CoA + H2O = fluoroacetate + CoA + H(+). In terms of biological role, hydrolyzes fluoroacetyl-CoA before it can react with citrate synthase, and thus confers fluoroacetate resistance. Cannot use acetyl-CoA as substrate. The protein is Fluoroacetyl-CoA thioesterase (flK) of Streptantibioticus cattleyicolor (Streptomyces cattleya).